Reading from the N-terminus, the 73-residue chain is EAGEECDCGSPANPCCDAATCKLRPGAQCADGLCCDQCRFIKKGTVCRPARGDWNDDTCTGQSADCPRNGLYG.

The Disintegrin domain maps to 1 to 73 (EAGEECDCGS…ADCPRNGLYG (73 aa)). 6 disulfides stabilise this stretch: cysteine 6-cysteine 21, cysteine 8-cysteine 16, cysteine 15-cysteine 38, cysteine 29-cysteine 35, cysteine 34-cysteine 59, and cysteine 47-cysteine 66. The short motif at 51–53 (RGD) is the Cell attachment site element.

The protein belongs to the venom metalloproteinase (M12B) family. P-II subfamily. P-IIa sub-subfamily. In terms of assembly, monomer (disintegrin). Expressed by the venom gland.

The protein localises to the secreted. In terms of biological role, inhibits the three processes involved in platelet function (adhesion, activation and aggregation). It inhibits platelet adhesion to fibronectin with an IC(50) of 58.6 nM. It inhibits ATP release from platelet induced by ADP with an IC(50) of 19.5 nM on platelet-rich plasma, probably by binding to ADP receptors (P2RY1 and P2RY12). Finally, it inhibits ADP-induced platelet aggregation with IC(50) of 44.7 nM on platelet-rich plasma and 19.3 nM on whole blood, probably by binding to alpha-IIb/beta-3 (ITGA2B/ITGB3). Functionally, inhibits ADP-induced platelet aggregation (IC(50) = 13.8 nM) probably by binding to alpha-IIb/beta-3 (ITGA2B/ITGB3) located on the platelet surface. This chain is Disintegrin mojastin-2, found in Crotalus scutulatus scutulatus (Mojave rattlesnake).